Here is a 232-residue protein sequence, read N- to C-terminus: 2-C-methyl-D-erythritol 4-phosphate cytidylyltransferase (232 aa).

The protein belongs to the IspD/TarI cytidylyltransferase family. IspD subfamily.

It catalyses the reaction 2-C-methyl-D-erythritol 4-phosphate + CTP + H(+) = 4-CDP-2-C-methyl-D-erythritol + diphosphate. It functions in the pathway isoprenoid biosynthesis; isopentenyl diphosphate biosynthesis via DXP pathway; isopentenyl diphosphate from 1-deoxy-D-xylulose 5-phosphate: step 2/6. Functionally, catalyzes the formation of 4-diphosphocytidyl-2-C-methyl-D-erythritol from CTP and 2-C-methyl-D-erythritol 4-phosphate (MEP). In Shewanella frigidimarina (strain NCIMB 400), this protein is 2-C-methyl-D-erythritol 4-phosphate cytidylyltransferase.